Consider the following 238-residue polypeptide: CD63 antigen (238 aa).

The Cytoplasmic segment spans residues 2-11 (AVEGGMKCVK). The helical transmembrane segment at 12-32 (FLLYVLLLAFCACAVGLIAIG) threads the bilayer. At 33-51 (VAVQVVLKQAITHETTAGS) the chain is on the extracellular side. A helical transmembrane segment spans residues 52 to 72 (LLPVVIIAVGAFLFLVAFVGC). Over 73 to 81 (CGACKENYC) the chain is Cytoplasmic. The helical transmembrane segment at 82–102 (LMITFAIFLSLIMLVEVAVAI) threads the bilayer. Over 103-203 (AGYVFRDQVK…TIAAWLRKNV (101 aa)) the chain is Extracellular. N-linked (GlcNAc...) asparagine glycosylation is found at Asn-130, Asn-150, and Asn-172. A helical transmembrane segment spans residues 204 to 224 (LLVAGAALGIAFVEVLGIIFS). The Cytoplasmic segment spans residues 225–238 (CCLVKSIRSGYEVM). The Lysosomal targeting motif motif lies at 234–238 (GYEVM).

This sequence belongs to the tetraspanin (TM4SF) family. As to quaternary structure, interacts with TIMP1 and ITGB1 and recruits TIMP1 to ITGB1. Interacts with CD9. Identified in a complex with CD9 and ITGB3. Interacts with PMEL. Interacts with KDR/VEGFR2; identified in a complex with ITGB1 and KDR/VEGFR2 and is required to recruit KDR to ITGB1 complexes. Interacts with SYT7. Palmitoylated at a low, basal level in unstimulated platelets. The level of palmitoylation increases when platelets are activated by thrombin (in vitro). In terms of tissue distribution, detected in mast cells and platelets (at protein level).

It localises to the cell membrane. It is found in the lysosome membrane. The protein localises to the late endosome membrane. The protein resides in the endosome. Its subcellular location is the multivesicular body. It localises to the melanosome. It is found in the secreted. The protein localises to the extracellular exosome. The protein resides in the cell surface. In terms of biological role, functions as a cell surface receptor for TIMP1 and plays a role in the activation of cellular signaling cascades. Plays a role in the activation of ITGB1 and integrin signaling, leading to the activation of AKT, FAK/PTK2 and MAP kinases. Promotes cell survival, reorganization of the actin cytoskeleton, cell adhesion, spreading and migration, via its role in the activation of AKT and FAK/PTK2. Plays a role in VEGFA signaling via its role in regulating the internalization of KDR/VEGFR2. Plays a role in intracellular vesicular transport processes, and is required for normal trafficking of the PMEL luminal domain that is essential for the development and maturation of melanocytes. Plays a role in the adhesion of leukocytes onto endothelial cells via its role in the regulation of SELP trafficking. May play a role in mast cell degranulation in response to Ms4a2/FceRI stimulation, but not in mast cell degranulation in response to other stimuli. This Rattus norvegicus (Rat) protein is CD63 antigen (Cd63).